Reading from the N-terminus, the 208-residue chain is ATP phosphoribosyltransferase (208 aa).

The protein belongs to the ATP phosphoribosyltransferase family. Short subfamily. As to quaternary structure, heteromultimer composed of HisG and HisZ subunits.

The protein localises to the cytoplasm. The catalysed reaction is 1-(5-phospho-beta-D-ribosyl)-ATP + diphosphate = 5-phospho-alpha-D-ribose 1-diphosphate + ATP. It functions in the pathway amino-acid biosynthesis; L-histidine biosynthesis; L-histidine from 5-phospho-alpha-D-ribose 1-diphosphate: step 1/9. In terms of biological role, catalyzes the condensation of ATP and 5-phosphoribose 1-diphosphate to form N'-(5'-phosphoribosyl)-ATP (PR-ATP). Has a crucial role in the pathway because the rate of histidine biosynthesis seems to be controlled primarily by regulation of HisG enzymatic activity. The polypeptide is ATP phosphoribosyltransferase (Clostridioides difficile (strain 630) (Peptoclostridium difficile)).